Reading from the N-terminus, the 926-residue chain is Mating-type protein A-alpha Y3 (926 aa).

The segment at residues 147-206 (YKKPRPKFHSEYTPLLELYFHFNAYPTFADRRMLAEKTGMQTRQITVWFQNHRRRAKGPL) is a DNA-binding region (homeobox). 4 disordered regions span residues 238-281 (SHLR…KVGK), 308-374 (QQAP…TSSA), 424-452 (GKGK…SRLN), and 625-734 (RARK…MNES). Composition is skewed to basic and acidic residues over residues 267–281 (KKPD…KVGK) and 326–338 (NAQD…ATKS). Residues 428–441 (PSQNLTSTPATFST) show a composition bias toward polar residues. The span at 632–660 (KQAEKEARKEEKRARKEAKQAKKDRKEQR) shows a compositional bias: basic and acidic residues. 2 stretches are compositionally biased toward low complexity: residues 669–687 (STLD…SATS) and 699–724 (SSAS…SGTS).

It is found in the nucleus. Functionally, specifies A-alpha-3 mating-type. May regulate the expression of genes specific to the homokaryotic cell type. This chain is Mating-type protein A-alpha Y3, found in Schizophyllum commune (Split gill fungus).